The primary structure comprises 361 residues: Molybdenum import ATP-binding protein ModC 1 (361 aa).

An ABC transporter domain is found at 1–237; the sequence is MPADGIRARF…LDLPTAFHED (237 aa). 35 to 42 serves as a coordination point for ATP; the sequence is GHSGSGKT. The 66-residue stretch at 296 to 361 folds into the Mop domain; the sequence is DSSITNVLPA…AQIKAVALLG (66 aa).

This sequence belongs to the ABC transporter superfamily. Molybdate importer (TC 3.A.1.8) family. The complex is composed of two ATP-binding proteins (ModC), two transmembrane proteins (ModB) and a solute-binding protein (ModA).

Its subcellular location is the cell inner membrane. The catalysed reaction is molybdate(out) + ATP + H2O = molybdate(in) + ADP + phosphate + H(+). Part of the ABC transporter complex ModABC involved in molybdenum import. Responsible for energy coupling to the transport system. The protein is Molybdenum import ATP-binding protein ModC 1 of Azotobacter vinelandii.